A 465-amino-acid polypeptide reads, in one-letter code: Ribulose bisphosphate carboxylase large chain (465 aa).

K4 is modified (N6,N6,N6-trimethyllysine). Residues N113 and T163 each coordinate substrate. K165 (proton acceptor) is an active-site residue. K167 serves as a coordination point for substrate. K191, D193, and E194 together coordinate Mg(2+). K191 carries the N6-carboxylysine modification. Residue H284 is the Proton acceptor of the active site. The substrate site is built by R285, H317, and S369.

Belongs to the RuBisCO large chain family. Type I subfamily. Heterohexadecamer of 8 large chains and 8 small chains; disulfide-linked. The disulfide link is formed within the large subunit homodimers. The cofactor is Mg(2+). Post-translationally, the disulfide bond which can form in the large chain dimeric partners within the hexadecamer appears to be associated with oxidative stress and protein turnover.

It localises to the plastid. The protein localises to the chloroplast. It carries out the reaction 2 (2R)-3-phosphoglycerate + 2 H(+) = D-ribulose 1,5-bisphosphate + CO2 + H2O. The catalysed reaction is D-ribulose 1,5-bisphosphate + O2 = 2-phosphoglycolate + (2R)-3-phosphoglycerate + 2 H(+). RuBisCO catalyzes two reactions: the carboxylation of D-ribulose 1,5-bisphosphate, the primary event in carbon dioxide fixation, as well as the oxidative fragmentation of the pentose substrate in the photorespiration process. Both reactions occur simultaneously and in competition at the same active site. The polypeptide is Ribulose bisphosphate carboxylase large chain (Combretum indicum (Rangoon creeper)).